The following is a 1423-amino-acid chain: Histone-lysine N-methyltransferase ATXR7 (1423 aa).

Positions H263–A312 constitute a GYF domain. Disordered stretches follow at residues C923 to K960, C1057 to D1097, and L1115 to K1158. The segment covering Q936–K949 has biased composition (basic residues). Residues N950–T959 are compositionally biased toward basic and acidic residues. Residues C1057–I1071 are compositionally biased toward polar residues. Composition is skewed to basic and acidic residues over residues L1115–Q1124 and H1140–P1157. The region spanning K1266 to K1383 is the SET domain. Y1382 contributes to the S-adenosyl-L-methionine binding site.

It belongs to the class V-like SAM-binding methyltransferase superfamily. Histone-lysine methyltransferase family. TRX/MLL subfamily. Expressed in the shoot and root apices, vascular tissues and mesophyll cells of rosette leaves.

It is found in the nucleus. The enzyme catalyses L-lysyl(4)-[histone H3] + 3 S-adenosyl-L-methionine = N(6),N(6),N(6)-trimethyl-L-lysyl(4)-[histone H3] + 3 S-adenosyl-L-homocysteine + 3 H(+). The catalysed reaction is L-lysyl(36)-[histone H3] + 2 S-adenosyl-L-methionine = N(6),N(6)-dimethyl-L-lysyl(36)-[histone H3] + 2 S-adenosyl-L-homocysteine + 2 H(+). In terms of biological role, histone methyltransferase involved in regulation of flowering time. Required for the expression of the flowering repressors FLC and MADS-box genes of the MAF family. Required for histone H3 dimethylation on 'Lys-36' H3K36me2 at the FLC locus. Required for histone H3 trimethylation on 'Lys-4' (H3K4me3) at the FLC locus. Prevents trimethylation on 'Lys-27' (H3K27me3) at the same locus. Involved in the control of seed dormancy and germination. The chain is Histone-lysine N-methyltransferase ATXR7 from Arabidopsis thaliana (Mouse-ear cress).